A 468-amino-acid chain; its full sequence is 6-phospho-beta-galactosidase 2 (468 aa).

Residues Gln-19, His-116, Asn-159, Glu-160, and Asn-297 each coordinate D-galactose 6-phosphate. Residue Glu-160 is the Proton donor of the active site. Glu-375 serves as the catalytic Nucleophile. Ser-428, Trp-429, Lys-435, and Tyr-437 together coordinate D-galactose 6-phosphate.

Belongs to the glycosyl hydrolase 1 family.

The enzyme catalyses a 6-phospho-beta-D-galactoside + H2O = D-galactose 6-phosphate + an alcohol. Its pathway is carbohydrate metabolism; lactose degradation; D-galactose 6-phosphate and beta-D-glucose from lactose 6-phosphate: step 1/1. The polypeptide is 6-phospho-beta-galactosidase 2 (Streptococcus pneumoniae (strain ATCC BAA-255 / R6)).